A 372-amino-acid polypeptide reads, in one-letter code: Cyclin-J (372 aa).

Residues 15–143 (DIHQALRYKE…LLETFQWNLC (129 aa)) enclose the Cyclin N-terminal domain.

This sequence belongs to the cyclin family.

In Homo sapiens (Human), this protein is Cyclin-J (CCNJ).